Here is a 364-residue protein sequence, read N- to C-terminus: Protein Wnt-6 (364 aa).

Positions 1-23 (MLPPVPSRLGLLLLLLCPAHVDG) are cleaved as a signal peptide. 11 disulfide bridges follow: cysteine 75/cysteine 86, cysteine 123/cysteine 131, cysteine 133/cysteine 171, cysteine 221/cysteine 235, cysteine 223/cysteine 230, cysteine 293/cysteine 324, cysteine 309/cysteine 319, cysteine 323/cysteine 363, cysteine 339/cysteine 354, cysteine 341/cysteine 351, and cysteine 346/cysteine 347. An N-linked (GlcNAc...) asparagine glycan is attached at asparagine 85. The tract at residues 140 to 162 (APPRPSGLLGTPGPPGPTGSPDA) is disordered. Serine 227 carries O-palmitoleoyl serine; by PORCN lipidation. N-linked (GlcNAc...) asparagine glycosylation occurs at asparagine 310.

This sequence belongs to the Wnt family. In terms of assembly, interacts with PORCN. Post-translationally, palmitoleoylation is required for efficient binding to frizzled receptors. Depalmitoleoylation leads to Wnt signaling pathway inhibition. Detected in ileum, colon and stomach (at protein level).

The protein localises to the secreted. It localises to the extracellular space. It is found in the extracellular matrix. In terms of biological role, ligand for members of the frizzled family of seven transmembrane receptors. Probable developmental protein. May be a signaling molecule which affects the development of discrete regions of tissues. Is likely to signal over only few cell diameters. The chain is Protein Wnt-6 (Wnt6) from Mus musculus (Mouse).